Reading from the N-terminus, the 224-residue chain is Cytidylate kinase (224 aa).

11-19 (GPASAGKST) lines the ATP pocket.

It belongs to the cytidylate kinase family. Type 1 subfamily.

The protein localises to the cytoplasm. It carries out the reaction CMP + ATP = CDP + ADP. The enzyme catalyses dCMP + ATP = dCDP + ADP. The polypeptide is Cytidylate kinase (Ligilactobacillus salivarius (strain UCC118) (Lactobacillus salivarius)).